A 638-amino-acid chain; its full sequence is 1-deoxy-D-xylulose-5-phosphate synthase (638 aa).

Thiamine diphosphate-binding positions include His79 and 120 to 122 (GHS). Asp151 lines the Mg(2+) pocket. Thiamine diphosphate-binding positions include 152-153 (GA), Asn182, Tyr291, and Glu373. Asn182 is a Mg(2+) binding site.

Belongs to the transketolase family. DXPS subfamily. As to quaternary structure, homodimer. Requires Mg(2+) as cofactor. Thiamine diphosphate is required as a cofactor.

It catalyses the reaction D-glyceraldehyde 3-phosphate + pyruvate + H(+) = 1-deoxy-D-xylulose 5-phosphate + CO2. It participates in metabolic intermediate biosynthesis; 1-deoxy-D-xylulose 5-phosphate biosynthesis; 1-deoxy-D-xylulose 5-phosphate from D-glyceraldehyde 3-phosphate and pyruvate: step 1/1. Functionally, catalyzes the acyloin condensation reaction between C atoms 2 and 3 of pyruvate and glyceraldehyde 3-phosphate to yield 1-deoxy-D-xylulose-5-phosphate (DXP). The polypeptide is 1-deoxy-D-xylulose-5-phosphate synthase (Xanthomonas euvesicatoria pv. vesicatoria (strain 85-10) (Xanthomonas campestris pv. vesicatoria)).